The sequence spans 303 residues: Movement protein (303 aa).

A compositionally biased stretch (polar residues) spans 1-18 (MSNIVSPFSGSSRTTSDV). Disordered regions lie at residues 1-24 (MSNI…QAGG) and 267-303 (EESE…LRIK).

It belongs to the bromovirus movement protein family. Phosphorylated by host.

It is found in the host cell junction. It localises to the host plasmodesma. Transports viral genome to neighboring plant cells directly through plasmosdesmata, without any budding. The movement protein allows efficient cell to cell propagation, by bypassing the host cell wall barrier. Acts by forming a tubular structure at the host plasmodesmata, enlarging it enough to allow free passage of virion capsids. The chain is Movement protein from Brome mosaic virus (BMV).